Here is a 116-residue protein sequence, read N- to C-terminus: MNITKNLKETKAVGKYIRLSPHKVRRVLDQIRGRKYQEALIILEFMPYRACYHIKQILESAGANAEHNNGLNKNQLFITKAFADKGPTLKRFQPRAQGRAFPIHKPTCHITLGVSE.

The protein belongs to the universal ribosomal protein uL22 family. Part of the 50S ribosomal subunit.

The protein resides in the plastid. It localises to the chloroplast. Its function is as follows. This protein binds specifically to 23S rRNA. In terms of biological role, the globular domain of the protein is located near the polypeptide exit tunnel on the outside of the subunit, while an extended beta-hairpin is found that lines the wall of the exit tunnel in the center of the 70S ribosome. This chain is Large ribosomal subunit protein uL22c (rpl22), found in Porphyra purpurea (Red seaweed).